The sequence spans 225 residues: Cytidylate kinase (225 aa).

Position 11-19 (11-19 (GPSGAGKGT)) interacts with ATP.

It belongs to the cytidylate kinase family. Type 1 subfamily.

It localises to the cytoplasm. It catalyses the reaction CMP + ATP = CDP + ADP. The catalysed reaction is dCMP + ATP = dCDP + ADP. This Mannheimia succiniciproducens (strain KCTC 0769BP / MBEL55E) protein is Cytidylate kinase.